The sequence spans 89 residues: Cell division topological specificity factor (89 aa).

The protein belongs to the MinE family.

Functionally, prevents the cell division inhibition by proteins MinC and MinD at internal division sites while permitting inhibition at polar sites. This ensures cell division at the proper site by restricting the formation of a division septum at the midpoint of the long axis of the cell. This is Cell division topological specificity factor from Paracoccus denitrificans (strain Pd 1222).